The sequence spans 359 residues: NADPH HC-toxin reductase 2 (359 aa).

NADP(+) contacts are provided by residues Arg-39, 67–68 (DL), 87–89 (VAT), Tyr-177, Lys-181, 206–209 (LGLV), and Thr-221. Lys-181 serves as the catalytic Proton donor.

Belongs to the NAD(P)-dependent epimerase/dehydratase family.

Its function is as follows. In tandem with Hm1, NADPH-dependent HC toxin reductase (HCTR), which inactivates HC toxin, a cyclic tetrapeptide produced by the fungus Cochliobolus carbonum to permit infection and acting as an inhibitor of host histone deacetylases (HDACs), thus conferring resistance against C.carbonum race 1 in resistant cultivars (e.g. cv. B73 and cv. Wisconsin 22). Catalyzes the production of 8-hydroxy derivative of HC-toxin via the reduction of the 8-keto group of 2-amino-9,10-epoxy-8-oxo-decanoic acid, an amino acid of the HC-toxin. This Zea mays (Maize) protein is NADPH HC-toxin reductase 2.